We begin with the raw amino-acid sequence, 193 residues long: CDP-diacylglycerol--glycerol-3-phosphate 3-phosphatidyltransferase (193 aa).

A run of 4 helical transmembrane segments spans residues I8–D28, I39–V59, A88–I108, and L157–S177.

It belongs to the CDP-alcohol phosphatidyltransferase class-I family.

It is found in the cell membrane. It catalyses the reaction a CDP-1,2-diacyl-sn-glycerol + sn-glycerol 3-phosphate = a 1,2-diacyl-sn-glycero-3-phospho-(1'-sn-glycero-3'-phosphate) + CMP + H(+). It participates in phospholipid metabolism; phosphatidylglycerol biosynthesis; phosphatidylglycerol from CDP-diacylglycerol: step 1/2. This protein catalyzes the committed step to the synthesis of the acidic phospholipids. This Bacillus subtilis (strain 168) protein is CDP-diacylglycerol--glycerol-3-phosphate 3-phosphatidyltransferase (pgsA).